The primary structure comprises 711 residues: Long-chain-fatty-acid--CoA ligase 4 (711 aa).

Residues 8–28 form a helical; Signal-anchor for type III membrane protein membrane-spanning segment; that stretch reads LTIILLPVHLLITIYSALIFI. The Cytoplasmic segment spans residues 29-711; sequence PWYFLTNAKK…KDIERMYGGK (683 aa). Residue serine 447 is modified to Phosphoserine.

It belongs to the ATP-dependent AMP-binding enzyme family. Requires Mg(2+) as cofactor.

The protein resides in the mitochondrion outer membrane. It is found in the peroxisome membrane. It localises to the microsome membrane. Its subcellular location is the endoplasmic reticulum membrane. The protein localises to the cell membrane. It carries out the reaction a long-chain fatty acid + ATP + CoA = a long-chain fatty acyl-CoA + AMP + diphosphate. It catalyses the reaction (5Z,8Z,11Z,14Z)-eicosatetraenoate + ATP + CoA = (5Z,8Z,11Z,14Z)-eicosatetraenoyl-CoA + AMP + diphosphate. The catalysed reaction is hexadecanoate + ATP + CoA = hexadecanoyl-CoA + AMP + diphosphate. The enzyme catalyses (E)-hexadec-2-enoate + ATP + CoA = (2E)-hexadecenoyl-CoA + AMP + diphosphate. It carries out the reaction 15-hydroxy-(5Z,8Z,11Z,13E)-eicosatetraenoate + ATP + CoA = 15-hydroxy-(5Z,8Z,11Z,13E)-eicosatetraenoyl-CoA + AMP + diphosphate. It catalyses the reaction 12-hydroxy-(5Z,8Z,10E,14Z)-eicosatetraenoate + ATP + CoA = 12-hydroxy-(5Z,8Z,10E,14Z)-eicosatetraenoyl-CoA + AMP + diphosphate. The catalysed reaction is 5-hydroxy-(6E,8Z,11Z,14Z)-eicosatetraenoate + ATP + CoA = 5-hydroxy-(6E,8Z,11Z,14Z)-eicosatetraenoyl-CoA + AMP + diphosphate. The enzyme catalyses 5,6-epoxy-(8Z,11Z,14Z)-eicosatrienoate + ATP + CoA = 5,6-epoxy-(8Z,11Z,14Z)-eicosatrienoyl-CoA + AMP + diphosphate. It carries out the reaction 14,15-epoxy-(5Z,8Z,11Z)-eicosatrienoate + ATP + CoA = 14,15-epoxy-(5Z,8Z,11Z)-eicosatrienoyl-CoA + AMP + diphosphate. It catalyses the reaction 11,12-epoxy-(5Z,8Z,14Z)-eicosatrienoate + ATP + CoA = 11,12-epoxy-(5Z,8Z,14Z)-eicosatrienoyl-CoA + AMP + diphosphate. The catalysed reaction is 8,9-epoxy-(5Z,11Z,14Z)-eicosatrienoate + ATP + CoA = 8,9-epoxy-(5Z,11Z,14Z)-eicosatrienoyl-CoA + AMP + diphosphate. Its activity is regulated as follows. Both triacsin C and rosiglitazone inhibit arachidonoyl-CoA ligase activity. In terms of biological role, catalyzes the conversion of long-chain fatty acids to their active form acyl-CoA for both synthesis of cellular lipids, and degradation via beta-oxidation. Preferentially activates arachidonate and eicosapentaenoate as substrates. Preferentially activates 8,9-EET &gt; 14,15-EET &gt; 5,6-EET &gt; 11,12-EET. Modulates glucose-stimulated insulin secretion by regulating the levels of unesterified EETs. Modulates prostaglandin E2 secretion. The protein is Long-chain-fatty-acid--CoA ligase 4 (ACSL4) of Homo sapiens (Human).